A 1076-amino-acid polypeptide reads, in one-letter code: DNA-directed RNA polymerase subunit beta (1076 aa).

This sequence belongs to the RNA polymerase beta chain family. In terms of assembly, in plastids the minimal PEP RNA polymerase catalytic core is composed of four subunits: alpha, beta, beta', and beta''. When a (nuclear-encoded) sigma factor is associated with the core the holoenzyme is formed, which can initiate transcription.

Its subcellular location is the plastid. The protein localises to the chloroplast. The catalysed reaction is RNA(n) + a ribonucleoside 5'-triphosphate = RNA(n+1) + diphosphate. In terms of biological role, DNA-dependent RNA polymerase catalyzes the transcription of DNA into RNA using the four ribonucleoside triphosphates as substrates. In Lolium perenne (Perennial ryegrass), this protein is DNA-directed RNA polymerase subunit beta.